Reading from the N-terminus, the 670-residue chain is DNA ligase (670 aa).

Residues 33 to 37 (DAEYD), 82 to 83 (SL), and E114 each bind NAD(+). The active-site N6-AMP-lysine intermediate is K116. Residues R137, E174, K291, and K315 each contribute to the NAD(+) site. Zn(2+) is bound by residues C409, C412, C427, and C433. The BRCT domain occupies 593–670 (GVELPLEGKT…TEQDLLNLMK (78 aa)).

The protein belongs to the NAD-dependent DNA ligase family. LigA subfamily. It depends on Mg(2+) as a cofactor. Mn(2+) is required as a cofactor.

It catalyses the reaction NAD(+) + (deoxyribonucleotide)n-3'-hydroxyl + 5'-phospho-(deoxyribonucleotide)m = (deoxyribonucleotide)n+m + AMP + beta-nicotinamide D-nucleotide.. Its function is as follows. DNA ligase that catalyzes the formation of phosphodiester linkages between 5'-phosphoryl and 3'-hydroxyl groups in double-stranded DNA using NAD as a coenzyme and as the energy source for the reaction. It is essential for DNA replication and repair of damaged DNA. This Vibrio campbellii (strain ATCC BAA-1116) protein is DNA ligase.